A 266-amino-acid chain; its full sequence is Undecaprenyl-diphosphatase (266 aa).

A run of 8 helical transmembrane segments spans residues 4-24, 41-61, 80-100, 105-125, 139-159, 182-202, 212-232, and 245-265; these read WVLAIILGVVEGLTEFIPVSS, GKVFEVMIQLGAILAVISVYF, FVASIVLAFLPAGFAGFLLHD, VLFETPAVICVSLILGGFALL, AGAFPLKTAFIIGLFQCLALI, AAEFSFFLAMPTMAGAFTVDL, DDAGIIALGFVCALVAAIITV, and APFAWWRIAVGALGLLGLAFI.

Belongs to the UppP family.

Its subcellular location is the cell inner membrane. The enzyme catalyses di-trans,octa-cis-undecaprenyl diphosphate + H2O = di-trans,octa-cis-undecaprenyl phosphate + phosphate + H(+). Its function is as follows. Catalyzes the dephosphorylation of undecaprenyl diphosphate (UPP). Confers resistance to bacitracin. The sequence is that of Undecaprenyl-diphosphatase from Phenylobacterium zucineum (strain HLK1).